Reading from the N-terminus, the 171-residue chain is Disulfide bond formation protein B (171 aa).

At 1 to 13 the chain is on the cytoplasmic side; sequence MSALTRFAQSRLA. The chain crosses the membrane as a helical span at residues 14 to 30; it reads WTLLLLTAVGLEACALF. Topologically, residues 31–48 are periplasmic; that stretch reads FQHVMKLDPCVMCIYQRL. Residues Cys-40 and Cys-43 are joined by a disulfide bond. The chain crosses the membrane as a helical span at residues 49 to 64; the sequence is AVLGVLTAGLIGVVGH. The Cytoplasmic portion of the chain corresponds to 65 to 71; sequence QFRLLRF. Residues 72–89 traverse the membrane as a helical segment; the sequence is LGVLLWGVSAAWGLKLAL. Residues 90–144 are Periplasmic-facing; that stretch reads ELVEMQTNPSPFSTCSFLPEFPEWMPLHEWFPSVFLPTGMCTDIPWEMFGITMSQ. Residues Cys-104 and Cys-130 are joined by a disulfide bond. The helical transmembrane segment at 145 to 163 threads the bilayer; sequence WMVVAFSTYLIALVVFIVP. Residues 164 to 171 lie on the Cytoplasmic side of the membrane; the sequence is ALMPTKKA.

It belongs to the DsbB family.

The protein localises to the cell inner membrane. Its function is as follows. Required for disulfide bond formation in some periplasmic proteins. Acts by oxidizing the DsbA protein. In Shewanella loihica (strain ATCC BAA-1088 / PV-4), this protein is Disulfide bond formation protein B.